The following is a 499-amino-acid chain: L-arabinose isomerase (499 aa).

The Mn(2+) site is built by Glu306, Glu333, His350, and His449.

The protein belongs to the arabinose isomerase family. The cofactor is Mn(2+).

It catalyses the reaction beta-L-arabinopyranose = L-ribulose. The protein operates within carbohydrate degradation; L-arabinose degradation via L-ribulose; D-xylulose 5-phosphate from L-arabinose (bacterial route): step 1/3. In terms of biological role, catalyzes the conversion of L-arabinose to L-ribulose. This Aeromonas hydrophila subsp. hydrophila (strain ATCC 7966 / DSM 30187 / BCRC 13018 / CCUG 14551 / JCM 1027 / KCTC 2358 / NCIMB 9240 / NCTC 8049) protein is L-arabinose isomerase.